The following is a 611-amino-acid chain: DNA mismatch repair protein MutL (611 aa).

This sequence belongs to the DNA mismatch repair MutL/HexB family.

In terms of biological role, this protein is involved in the repair of mismatches in DNA. It is required for dam-dependent methyl-directed DNA mismatch repair. May act as a 'molecular matchmaker', a protein that promotes the formation of a stable complex between two or more DNA-binding proteins in an ATP-dependent manner without itself being part of a final effector complex. The polypeptide is DNA mismatch repair protein MutL (Borrelia garinii subsp. bavariensis (strain ATCC BAA-2496 / DSM 23469 / PBi) (Borreliella bavariensis)).